The chain runs to 94 residues: Non-specific lipid-transfer protein C4 (94 aa).

The N-terminal stretch at 1 to 26 is a signal peptide; sequence MAASKGNAAAAACALVLVLLAVGAEA. 4 disulfide bridges follow: Cys34-Cys72, Cys44-Cys59, Cys60-Cys85, and Cys70-Cys92. A glycan (N-linked (GlcNAc...) asparagine) is linked at Asn91.

This sequence belongs to the plant LTP family.

Functionally, lipid-transfer protein that may be regulated by the transcription factor UDT1 in developing anthers and play a role in tapetum development. This Oryza sativa subsp. japonica (Rice) protein is Non-specific lipid-transfer protein C4.